Here is a 126-residue protein sequence, read N- to C-terminus: Non-specific lipid-transfer protein 15 (126 aa).

The signal sequence occupies residues 1-22 (MSKSIFVVCITLLVVLSPTLNA). 4 disulfides stabilise this stretch: cysteine 34-cysteine 80, cysteine 45-cysteine 57, cysteine 58-cysteine 100, and cysteine 78-cysteine 114.

It belongs to the plant LTP family.

Functionally, plant non-specific lipid-transfer proteins transfer phospholipids as well as galactolipids across membranes. May play a role in wax or cutin deposition in the cell walls of expanding epidermal cells and certain secretory tissues. This is Non-specific lipid-transfer protein 15 (LTP15) from Arabidopsis thaliana (Mouse-ear cress).